The following is a 344-amino-acid chain: 4-dimethylallyltryptophan N-methyltransferase easF (344 aa).

It belongs to the methyltransferase superfamily. In terms of assembly, homodimer.

It catalyses the reaction 4-(3-methylbut-2-enyl)-L-tryptophan + S-adenosyl-L-methionine = 4-(3-methylbut-2-enyl)-L-abrine + S-adenosyl-L-homocysteine + H(+). It functions in the pathway alkaloid biosynthesis; ergot alkaloid biosynthesis. 4-dimethylallyltryptophan N-methyltransferase; part of the gene cluster that mediates the biosynthesis of fungal ergot alkaloid. DmaW catalyzes the first step of ergot alkaloid biosynthesis by condensing dimethylallyl diphosphate (DMAP) and tryptophan to form 4-dimethylallyl-L-tryptophan. The second step is catalyzed by the methyltransferase easF that methylates 4-dimethylallyl-L-tryptophan in the presence of S-adenosyl-L-methionine, resulting in the formation of 4-dimethylallyl-L-abrine. The catalase easC and the FAD-dependent oxidoreductase easE then transform 4-dimethylallyl-L-abrine to chanoclavine-I which is further oxidized by easD in the presence of NAD(+), resulting in the formation of chanoclavine-I aldehyde. Agroclavine dehydrogenase easG then mediates the conversion of chanoclavine-I aldehyde to agroclavine via a non-enzymatic adduct reaction: the substrate is an iminium intermediate that is formed spontaneously from chanoclavine-I aldehyde in the presence of glutathione. The presence of easA is not required to complete this reaction. Further conversion of agroclavine to paspalic acid is a two-step process involving oxidation of agroclavine to elymoclavine and of elymoclavine to paspalic acid, the second step being performed by the elymoclavine oxidase cloA. Paspalic acid is then further converted to D-lysergic acid. Ergopeptines are assembled from D-lysergic acid and three different amino acids by the D-lysergyl-peptide-synthetases composed each of a monomudular and a trimodular nonribosomal peptide synthetase subunit. LpsB and lpsC encode the monomodular subunits responsible for D-lysergic acid activation and incorporation into the ergopeptine backbone. LpsA1 and A2 subunits encode the trimodular nonribosomal peptide synthetase assembling the tripeptide portion of ergopeptines. LpsA1 is responsible for formation of the major ergopeptine, ergotamine, and lpsA2 for alpha-ergocryptine, the minor ergopeptine of the total alkaloid mixture elaborated by C.purpurea. D-lysergyl-tripeptides are assembled by the nonribosomal peptide synthetases and released as N-(D-lysergyl-aminoacyl)-lactams. Cyclolization of the D-lysergyl-tripeptides is performed by the Fe(2+)/2-ketoglutarate-dependent dioxygenase easH which introduces a hydroxyl group into N-(D-lysergyl-aminoacyl)-lactam at alpha-C of the aminoacyl residue followed by spontaneous condensation with the terminal lactam carbonyl group. This chain is 4-dimethylallyltryptophan N-methyltransferase easF, found in Claviceps purpurea (Ergot fungus).